Reading from the N-terminus, the 103-residue chain is MEQVQAALNATADKATLTPQMQRMMNRQAENTKRVEETIKGTKSNPRWFVPLFCALMIIGLIWCVVYYLSPSGSWPIPNIGAWNLGIGFALIMIGFLMTMGWR.

A run of 2 helical transmembrane segments spans residues 49-69 (FVPL…VYYL) and 80-100 (IGAW…LMTM).

Belongs to the CrgA family.

The protein localises to the cell membrane. Its function is as follows. Involved in cell division. In Bifidobacterium longum (strain NCC 2705), this protein is Cell division protein CrgA.